The sequence spans 335 residues: Transmembrane protein 120B-A (335 aa).

Positions 1-40 (MSLQKCQEEWSEIEKEFQQLQETHKVYKQKLEELNSLQNL) form a coiled coil. The next 6 membrane-spanning stretches (helical) occupy residues 100-122 (GLYLNLVLGNVNVTLLSTQAKFA), 130-150 (FKLYLTIILLLGAITCRFVLN), 157-177 (VFNFLLVWYYCTLTIRESILI), 193-213 (VSTFLSGVMLTWPDGLMYQIF), 268-288 (FLLPFLFFGHFWQLYNAITLF), and 300-320 (QVFVLALTFLLLFLGNFLTTL).

It belongs to the TMEM120 family.

It localises to the nucleus inner membrane. Necessary for efficient adipogenesis. Does not show ion channel activity. In Xenopus laevis (African clawed frog), this protein is Transmembrane protein 120B-A (tmem120b-a).